A 547-amino-acid chain; its full sequence is Chaperonin GroEL 2 (547 aa).

Residues 30–33, Lys-51, 87–91, Gly-415, 479–481, and Asp-495 each bind ATP; these read TLGP, DGTTT, and NAA. The segment at 525-547 is disordered; sequence PKEESAAPAGGGMGGMGGMGGMM. A compositionally biased stretch (gly residues) spans 533-547; sequence AGGGMGGMGGMGGMM.

Belongs to the chaperonin (HSP60) family. As to quaternary structure, forms a cylinder of 14 subunits composed of two heptameric rings stacked back-to-back. Interacts with the co-chaperonin GroES.

The protein localises to the cytoplasm. The enzyme catalyses ATP + H2O + a folded polypeptide = ADP + phosphate + an unfolded polypeptide.. In terms of biological role, together with its co-chaperonin GroES, plays an essential role in assisting protein folding. The GroEL-GroES system forms a nano-cage that allows encapsulation of the non-native substrate proteins and provides a physical environment optimized to promote and accelerate protein folding. In Anaeromyxobacter dehalogenans (strain 2CP-C), this protein is Chaperonin GroEL 2.